The sequence spans 358 residues: Molybdenum import ATP-binding protein ModC (358 aa).

The region spanning 3–228 (INVKQKLGDL…LEMRPWLPAK (226 aa)) is the ABC transporter domain. Residue 30 to 37 (GRSGAGKT) coordinates ATP. Residues 289 to 356 (QTSIRNVLLA…IKGVSVTKDD (68 aa)) enclose the Mop domain.

This sequence belongs to the ABC transporter superfamily. Molybdate importer (TC 3.A.1.8) family. The complex is composed of two ATP-binding proteins (ModC), two transmembrane proteins (ModB) and a solute-binding protein (ModA).

It is found in the cell inner membrane. The catalysed reaction is molybdate(out) + ATP + H2O = molybdate(in) + ADP + phosphate + H(+). Its function is as follows. Part of the ABC transporter complex ModABC involved in molybdenum import. Responsible for energy coupling to the transport system. The protein is Molybdenum import ATP-binding protein ModC of Photobacterium profundum (strain SS9).